The sequence spans 312 residues: Ribose-phosphate pyrophosphokinase (312 aa).

ATP contacts are provided by residues 34-36 (DGE) and 93-94 (RQ). 2 residues coordinate Mg(2+): H128 and D167. Residue K191 is part of the active site. D-ribose 5-phosphate is bound by residues R193 and D217.

It belongs to the ribose-phosphate pyrophosphokinase family. Class I subfamily. In terms of assembly, homohexamer. The cofactor is Mg(2+).

It localises to the cytoplasm. It carries out the reaction D-ribose 5-phosphate + ATP = 5-phospho-alpha-D-ribose 1-diphosphate + AMP + H(+). The protein operates within metabolic intermediate biosynthesis; 5-phospho-alpha-D-ribose 1-diphosphate biosynthesis; 5-phospho-alpha-D-ribose 1-diphosphate from D-ribose 5-phosphate (route I): step 1/1. Its function is as follows. Involved in the biosynthesis of the central metabolite phospho-alpha-D-ribosyl-1-pyrophosphate (PRPP) via the transfer of pyrophosphoryl group from ATP to 1-hydroxyl of ribose-5-phosphate (Rib-5-P). This is Ribose-phosphate pyrophosphokinase from Baumannia cicadellinicola subsp. Homalodisca coagulata.